A 102-amino-acid chain; its full sequence is Large ribosomal subunit protein bL21 (102 aa).

The protein belongs to the bacterial ribosomal protein bL21 family. Part of the 50S ribosomal subunit. Contacts protein L20.

Its function is as follows. This protein binds to 23S rRNA in the presence of protein L20. This chain is Large ribosomal subunit protein bL21, found in Photorhabdus laumondii subsp. laumondii (strain DSM 15139 / CIP 105565 / TT01) (Photorhabdus luminescens subsp. laumondii).